The primary structure comprises 170 residues: Single-stranded DNA-binding protein (170 aa).

An oligomerization region spans residues 1–26; the sequence is MSNELKQVEQTEEAVVVSETKDYIKV.

This sequence belongs to the phi29likevirus single-strand-binding protein family. Hexamer.

In terms of biological role, single-stranded DNA-binding protein required for the elongation during viral DNA replication by strand displacement. Displaced viral DNA strands are transiently coated with the ssDNA-binding protein and therefore protected againt nucleases. The latter is then probably removed by the replisome that performs lagging strand synthesis or during the events that lead up to the recombination process. Has helix-destabilizing activity since it removes secondary structure from the ssDNA in replicative intermediates. The polypeptide is Single-stranded DNA-binding protein (Bacillus subtilis (Bacteriophage GA-1)).